A 183-amino-acid polypeptide reads, in one-letter code: 1,6-anhydro-N-acetylmuramyl-L-alanine amidase AmpD (183 aa).

The N-acetylmuramoyl-L-alanine amidase domain occupies 30–167; that stretch reads LLVVHNISLP…APDRKTDPGP (138 aa). His-34 contacts Zn(2+). Glu-116 functions as the Proton acceptor in the catalytic mechanism. Zn(2+)-binding residues include His-154 and Asp-164.

Belongs to the N-acetylmuramoyl-L-alanine amidase 2 family. The cofactor is Zn(2+).

It localises to the cytoplasm. It carries out the reaction Hydrolyzes the link between N-acetylmuramoyl residues and L-amino acid residues in certain cell-wall glycopeptides.. In terms of biological role, involved in cell wall peptidoglycan recycling. Specifically cleaves the amide bond between the lactyl group of N-acetylmuramic acid and the alpha-amino group of the L-alanine in degradation products containing an anhydro N-acetylmuramyl moiety. Is also involved in beta-lactamase induction. This is 1,6-anhydro-N-acetylmuramyl-L-alanine amidase AmpD (ampD) from Escherichia coli (strain K12).